The chain runs to 651 residues: Acetyl-coenzyme A synthetase (651 aa).

CoA is bound by residues 191-194 (RGGK), Thr311, and Asn335. Residues 387–389 (GEP), 411–416 (DTWWQT), Asp500, and Arg515 contribute to the ATP site. Ser523 provides a ligand contact to CoA. Arg526 is an ATP binding site. Mg(2+) is bound by residues Val537, His539, and Val542. CoA is bound at residue Arg584. N6-acetyllysine is present on Lys609.

Belongs to the ATP-dependent AMP-binding enzyme family. Requires Mg(2+) as cofactor. In terms of processing, acetylated. Deacetylation by the SIR2-homolog deacetylase activates the enzyme.

It carries out the reaction acetate + ATP + CoA = acetyl-CoA + AMP + diphosphate. Its function is as follows. Catalyzes the conversion of acetate into acetyl-CoA (AcCoA), an essential intermediate at the junction of anabolic and catabolic pathways. AcsA undergoes a two-step reaction. In the first half reaction, AcsA combines acetate with ATP to form acetyl-adenylate (AcAMP) intermediate. In the second half reaction, it can then transfer the acetyl group from AcAMP to the sulfhydryl group of CoA, forming the product AcCoA. This Pseudomonas syringae pv. tomato (strain ATCC BAA-871 / DC3000) protein is Acetyl-coenzyme A synthetase.